We begin with the raw amino-acid sequence, 197 residues long: Amino-terminal enhancer of split (197 aa).

Low complexity predominate over residues 1–15; it reads MMFPQSSSRHSGSSH. Disordered regions lie at residues 1–20 and 169–197; these read MMFP…PQQL and LGSQ…DKSD. The CCN domain stretch occupies residues 166–197; the sequence is LSALGSQGHLPKEDKNGHEGDRRPDDDGDKSD. A compositionally biased stretch (basic and acidic residues) spans 175-197; sequence LPKEDKNGHEGDRRPDDDGDKSD.

Belongs to the WD repeat Groucho/TLE family. In terms of assembly, monomer. Post-translationally, ubiquitinated by XIAP/BIRC4. In terms of tissue distribution, predominantly expressed in brain, testis and ovary. Ubiquitously expressed in the developing embryo. Present in unfertilized and fertilized eggs.

Its subcellular location is the nucleus. In terms of biological role, may act as a transcriptional corepressor. Has a possible role in the negative regulation of proteins containing WD-40 repeats. May be required for the initiation and maintenance of the differentiated state. The polypeptide is Amino-terminal enhancer of split (aes) (Xenopus laevis (African clawed frog)).